Consider the following 447-residue polypeptide: MTAHEVNFDGLVGLTHHYAGLSFGNEASTRHRFQVSNPLLAVKQGLLKMKALADAGFPQAVIPPHERPFIPALRQLGFSGNDEQILDKVARQAPRWLSRVSSASPMWVANAATVCPSADALDGKVHLTVANLNNKFHRSLEAPVTEALLRTIFRDESRFSLHSALPQVALLGDEGAANHNRLGGEYGLAGVQLFVYGREEGNEKRPARYPARQTREASEAVARLNQVNPQQVIFAQQNPEAIDQGVFHNDVIAVSNRQVLFCHEAAFARQERLINHLRTRVDGFMAIEVPADEVSVSDAVATYLFNSQLLSRDDGSMLLVLPQECQDHVGVWRYLNKLVAEDNPISAMQVFDLRESMANGGGPACLRLRVVLTEEEQRAVNPAVMMNDALFTALNAWAERFYRDRLTAADLADPLLLREGREALDVLTRLLDLGSVYPFQQTGAADG.

Substrate is bound by residues 19-28 (AGLSFGNEAS), asparagine 110, and 137-138 (HR). The active site involves glutamate 174. Arginine 212 provides a ligand contact to substrate. Histidine 248 is a catalytic residue. Positions 250 and 359 each coordinate substrate. The active-site Nucleophile is cysteine 365.

The protein belongs to the succinylarginine dihydrolase family. As to quaternary structure, homodimer.

It carries out the reaction N(2)-succinyl-L-arginine + 2 H2O + 2 H(+) = N(2)-succinyl-L-ornithine + 2 NH4(+) + CO2. Its pathway is amino-acid degradation; L-arginine degradation via AST pathway; L-glutamate and succinate from L-arginine: step 2/5. In terms of biological role, catalyzes the hydrolysis of N(2)-succinylarginine into N(2)-succinylornithine, ammonia and CO(2). In Salmonella arizonae (strain ATCC BAA-731 / CDC346-86 / RSK2980), this protein is N-succinylarginine dihydrolase.